Reading from the N-terminus, the 118-residue chain is Myotrophin (118 aa).

Position 2 is an N-acetylcysteine (Cys2). One copy of the ANK 1 repeat lies at 2 to 30; the sequence is CDKEFMWALKNGDLDEVKDYVAKGEDVNR. N6-acetyllysine occurs at positions 4, 11, and 24. A Phosphothreonine modification is found at Thr31. ANK repeat units follow at residues 34 to 66 and 67 to 99; these read GGRK…APDK and HHIT…VKGP.

Belongs to the myotrophin family. In terms of assembly, interacts with the heterodimer formed by CAPZA1 and CAPZB. Interacts with RELA.

The protein localises to the cytoplasm. It is found in the nucleus. It localises to the perinuclear region. Plays a role in the regulation of the growth of actin filaments. Inhibits the activity of the F-actin-capping protein complex formed by the CAPZA1 and CAPZB heterodimer. Promotes dimerization of NF-kappa-B subunits and regulates NF-kappa-B transcription factor activity. Promotes growth of cardiomyocytes, but not cardiomyocyte proliferation. Promotes cardiac muscle hypertrophy. The polypeptide is Myotrophin (Mtpn) (Rattus norvegicus (Rat)).